Here is a 415-residue protein sequence, read N- to C-terminus: Tyrosine--tRNA ligase (415 aa).

The short motif at 54 to 63 (PTGSNIHLGH) is the 'HIGH' region element. Residues 248 to 252 (KMSKT) carry the 'KMSKS' region motif. An ATP-binding site is contributed by K251. An S4 RNA-binding domain is found at 351–415 (AKAFYLMSAV…GKKTFRRLTA (65 aa)).

Belongs to the class-I aminoacyl-tRNA synthetase family. TyrS type 2 subfamily. In terms of assembly, homodimer.

The protein localises to the cytoplasm. It catalyses the reaction tRNA(Tyr) + L-tyrosine + ATP = L-tyrosyl-tRNA(Tyr) + AMP + diphosphate + H(+). Its function is as follows. Catalyzes the attachment of tyrosine to tRNA(Tyr) in a two-step reaction: tyrosine is first activated by ATP to form Tyr-AMP and then transferred to the acceptor end of tRNA(Tyr). The protein is Tyrosine--tRNA ligase of Synechococcus sp. (strain CC9902).